We begin with the raw amino-acid sequence, 180 residues long: Pro-glucagon (180 aa).

The signal sequence occupies residues 1 to 20 (MKSIYFVAGLFVMLVQGSWQ). The disordered stretch occupies residues 26–56 (TEEKSRSFSAPQTEPLNDLDQMNEDKRHSQG). S54 bears the Phosphoserine mark. Positions 84–89 (NKNNIA) are excised as a propeptide. S105 and S108 each carry phosphoserine. An Arginine amide modification is found at R127. The propeptide occupies 131-145 (DFPEEVAIVEEFRRR). 2 positions are modified to phosphoserine: S150 and S152.

Belongs to the glucagon family. Post-translationally, proglucagon is post-translationally processed in a tissue-specific manner in pancreatic A cells and intestinal L cells. In pancreatic A cells, the major bioactive hormone is glucagon cleaved by PCSK2/PC2. In the intestinal L cells PCSK1/PC1 liberates GLP-1, GLP-2, glicentin and oxyntomodulin. GLP-1 is further N-terminally truncated by post-translational processing in the intestinal L cells resulting in GLP-1(7-37) GLP-1-(7-36)amide. The C-terminal amidation is neither important for the metabolism of GLP-1 nor for its effects on the endocrine pancreas. In terms of tissue distribution, glucagon is secreted in the A cells of the islets of Langerhans. GLP-1, GLP-2, oxyntomodulin and glicentin are secreted from enteroendocrine cells throughout the gastrointestinal tract. GLP-1 and GLP-2 are also secreted in selected neurons in the brain.

The protein resides in the secreted. Functionally, plays a key role in glucose metabolism and homeostasis. Regulates blood glucose by increasing gluconeogenesis and decreasing glycolysis. A counterregulatory hormone of insulin, raises plasma glucose levels in response to insulin-induced hypoglycemia. Plays an important role in initiating and maintaining hyperglycemic conditions in diabetes. Potent stimulator of glucose-dependent insulin release. Also stimulates insulin release in response to IL6. Plays important roles on gastric motility and the suppression of plasma glucagon levels. May be involved in the suppression of satiety and stimulation of glucose disposal in peripheral tissues, independent of the actions of insulin. Has growth-promoting activities on intestinal epithelium. May also regulate the hypothalamic pituitary axis (HPA) via effects on LH, TSH, CRH, oxytocin, and vasopressin secretion. Increases islet mass through stimulation of islet neogenesis and pancreatic beta cell proliferation. Inhibits beta cell apoptosis. In terms of biological role, stimulates intestinal growth and up-regulates villus height in the small intestine, concomitant with increased crypt cell proliferation and decreased enterocyte apoptosis. The gastrointestinal tract, from the stomach to the colon is the principal target for GLP-2 action. Plays a key role in nutrient homeostasis, enhancing nutrient assimilation through enhanced gastrointestinal function, as well as increasing nutrient disposal. Stimulates intestinal glucose transport and decreases mucosal permeability. Its function is as follows. Significantly reduces food intake. Inhibits gastric emptying in humans. Suppression of gastric emptying may lead to increased gastric distension, which may contribute to satiety by causing a sensation of fullness. Functionally, may modulate gastric acid secretion and the gastro-pyloro-duodenal activity. May play an important role in intestinal mucosal growth in the early period of life. The chain is Pro-glucagon (GCG) from Canis lupus familiaris (Dog).